A 175-amino-acid polypeptide reads, in one-letter code: MSAIAQEREARINGEITAREIRLVGKEGEQIGIVSLREAMALAEENDVDLVEISPTAQPPVCKLMDYGKYKYEQSKKRHEAKQKQKQVQIKEIKFRPGTDDGDYNVKLRNLVRFLTEGDKAKVTLRFRGREMAHQDIGLALLKRVEADLAEVGTVEQFPRLEGRQMVMMIAPKKK.

The protein belongs to the IF-3 family. As to quaternary structure, monomer.

It is found in the cytoplasm. In terms of biological role, IF-3 binds to the 30S ribosomal subunit and shifts the equilibrium between 70S ribosomes and their 50S and 30S subunits in favor of the free subunits, thus enhancing the availability of 30S subunits on which protein synthesis initiation begins. The protein is Translation initiation factor IF-3 of Chromobacterium violaceum (strain ATCC 12472 / DSM 30191 / JCM 1249 / CCUG 213 / NBRC 12614 / NCIMB 9131 / NCTC 9757 / MK).